The chain runs to 308 residues: Vomeronasal type-1 receptor 92 (308 aa).

At 1–18 the chain is on the extracellular side; sequence MNKDNTLHTIMKITMFSE. Residues 19–39 traverse the membrane as a helical segment; that stretch reads VSVGISANSILFFAHLCMLLG. Residues 40 to 48 lie on the Cytoplasmic side of the membrane; sequence ENRPKPFHL. Residues 49-69 traverse the membrane as a helical segment; that stretch reads YIVSLSLTQLILLITMGLIAV. The Extracellular portion of the chain corresponds to 70 to 91; that stretch reads DMFMSWGRWDSTPCQSLIYLHR. Cysteines 83 and 170 form a disulfide. Residues 92-112 form a helical membrane-spanning segment; that stretch reads LLRGFTLCAACLLNVFWMITL. Residues 113 to 132 are Cytoplasmic-facing; that stretch reads SPRSSCLSKFKHNSPHHISG. A helical membrane pass occupies residues 133–153; sequence AFLFLCVLYMSFSSHLLVSII. Residues 154 to 188 are Extracellular-facing; it reads ATPNLTSNIFMYVTQSCSLLPMSYSRTSTFSTTIA. N-linked (GlcNAc...) asparagine glycosylation occurs at N157. A helical transmembrane segment spans residues 189 to 209; sequence IREAFLISLMALSSGFMVTLL. Over 210 to 236 the chain is Cytoplasmic; it reads WRHKKQAQHLHSTSLSSKASPERRATR. Residues 237 to 257 traverse the membrane as a helical segment; sequence TILLLMSFFVVLYILENVVFY. Residues 258 to 267 lie on the Extracellular side of the membrane; the sequence is SRMKFKDGSM. Residues 268 to 288 form a helical membrane-spanning segment; that stretch reads FYCVQIIVSHSYATISPFVFI. Topologically, residues 289–308 are cytoplasmic; the sequence is CTEKHMTKILRSVCTRIINI.

It belongs to the G-protein coupled receptor 1 family.

The protein resides in the cell membrane. In terms of biological role, putative pheromone receptor implicated in the regulation of social as well as reproductive behavior. This Rattus norvegicus (Rat) protein is Vomeronasal type-1 receptor 92 (Vom1r92).